The following is a 396-amino-acid chain: Ribosomal RNA large subunit methyltransferase I (396 aa).

The 80-residue stretch at 2–81 folds into the PUA domain; the sequence is SVRLVLAKGR…ESIDIAFFSR (80 aa).

This sequence belongs to the methyltransferase superfamily. RlmI family.

It is found in the cytoplasm. The catalysed reaction is cytidine(1962) in 23S rRNA + S-adenosyl-L-methionine = 5-methylcytidine(1962) in 23S rRNA + S-adenosyl-L-homocysteine + H(+). Its function is as follows. Specifically methylates the cytosine at position 1962 (m5C1962) of 23S rRNA. This chain is Ribosomal RNA large subunit methyltransferase I, found in Shigella boydii serotype 18 (strain CDC 3083-94 / BS512).